The primary structure comprises 351 residues: MREIIERVKEKTTIPVYERTIENVLSAIQASGDVWRIVDLSEEPLPLVVAVVTALYELGYVAFENNQVILTRKGKELVEKYGIGPRADYTCSHCQGRTVEIDAFSELLEQFKEITRDRPEPAHQFDQAYVTPETTVARVALMHSRGDLENKEVFVLGDDDLTSVALMLSGLPKRIAVLDIDERLTKFIEKAADEIGYENIEIFTFDLRKPLPDYALHKFDTFITDPPETVEAIRAFVGRGIATLKGPGCAGYFGITRRESSLDKWREIQRVLLNEFGVVITDIIRNFNEYVNWGYVEETRAWRLLPIKVKPSYNWYKSYMFRIQTLEGSKGFEDEITVGQELYDDEESSTT.

Belongs to the branched-chain polyamine synthase family.

Its subcellular location is the cytoplasm. The enzyme catalyses 2 S-adenosyl 3-(methylsulfanyl)propylamine + spermidine = N(4)-bis(aminopropyl)spermidine + 2 S-methyl-5'-thioadenosine + 2 H(+). The protein operates within amine and polyamine biosynthesis. In terms of biological role, involved in the biosynthesis of branched-chain polyamines, which support the growth of thermophiles under high-temperature conditions. Catalyzes the sequential condensation of spermidine with the aminopropyl groups of decarboxylated S-adenosylmethionines to produce N(4)-bis(aminopropyl)spermidine via N(4)-aminopropylspermidine. Can also use spermine to produce N(4)-aminopropylspermine. This is N(4)-bis(aminopropyl)spermidine synthase from Thermococcus kodakarensis (strain ATCC BAA-918 / JCM 12380 / KOD1) (Pyrococcus kodakaraensis (strain KOD1)).